A 955-amino-acid chain; its full sequence is Glycine dehydrogenase (decarboxylating) (955 aa).

Lysine 705 is modified (N6-(pyridoxal phosphate)lysine).

This sequence belongs to the GcvP family. The glycine cleavage system is composed of four proteins: P, T, L and H. Pyridoxal 5'-phosphate is required as a cofactor.

It catalyses the reaction N(6)-[(R)-lipoyl]-L-lysyl-[glycine-cleavage complex H protein] + glycine + H(+) = N(6)-[(R)-S(8)-aminomethyldihydrolipoyl]-L-lysyl-[glycine-cleavage complex H protein] + CO2. The glycine cleavage system catalyzes the degradation of glycine. The P protein binds the alpha-amino group of glycine through its pyridoxal phosphate cofactor; CO(2) is released and the remaining methylamine moiety is then transferred to the lipoamide cofactor of the H protein. The chain is Glycine dehydrogenase (decarboxylating) from Aliivibrio salmonicida (strain LFI1238) (Vibrio salmonicida (strain LFI1238)).